The chain runs to 159 residues: Ribosomal RNA large subunit methyltransferase H (159 aa).

Residues L76 and G108 each contribute to the S-adenosyl-L-methionine site.

It belongs to the RNA methyltransferase RlmH family. Homodimer.

The protein resides in the cytoplasm. The enzyme catalyses pseudouridine(1915) in 23S rRNA + S-adenosyl-L-methionine = N(3)-methylpseudouridine(1915) in 23S rRNA + S-adenosyl-L-homocysteine + H(+). In terms of biological role, specifically methylates the pseudouridine at position 1915 (m3Psi1915) in 23S rRNA. The sequence is that of Ribosomal RNA large subunit methyltransferase H from Lactiplantibacillus plantarum (strain ATCC BAA-793 / NCIMB 8826 / WCFS1) (Lactobacillus plantarum).